The following is a 129-amino-acid chain: Protein Turandot B1 (129 aa).

An N-terminal signal peptide occupies residues 1-21; the sequence is MNSATSLMCFALLLISPLCMG.

Belongs to the Turandot family.

The protein resides in the secreted. In terms of biological role, a humoral factor that may play a role in stress tolerance. This chain is Protein Turandot B1 (TotB1), found in Drosophila erecta (Fruit fly).